Here is a 201-residue protein sequence, read N- to C-terminus: Retinol-binding protein 4 (201 aa).

Residues methionine 1–alanine 18 form the signal peptide. Intrachain disulfides connect cysteine 22–cysteine 178, cysteine 88–cysteine 192, and cysteine 138–cysteine 147. A substrate-binding site is contributed by glutamine 116. Arginine 139 is modified (omega-N-methylarginine).

The protein belongs to the calycin superfamily. Lipocalin family. In terms of assembly, interacts with TTR. Interaction with TTR prevents its loss by filtration through the kidney glomeruli. Interacts with STRA6.

The protein localises to the secreted. Its function is as follows. Retinol-binding protein that mediates retinol transport in blood plasma. Delivers retinol from the liver stores to the peripheral tissues. Transfers the bound all-trans retinol to STRA6, that then facilitates retinol transport across the cell membrane. The polypeptide is Retinol-binding protein 4 (Rbp4) (Mus musculus (Mouse)).